A 424-amino-acid polypeptide reads, in one-letter code: Imidazolonepropionase (424 aa).

The Fe(3+) site is built by His84 and His86. His84 and His86 together coordinate Zn(2+). Positions 93, 156, and 189 each coordinate 4-imidazolone-5-propanoate. Tyr156 lines the N-formimidoyl-L-glutamate pocket. His254 serves as a coordination point for Fe(3+). A Zn(2+)-binding site is contributed by His254. Residue Glu257 coordinates 4-imidazolone-5-propanoate. Fe(3+) is bound at residue Asp328. Asp328 serves as a coordination point for Zn(2+). Residues Asn330 and Gly332 each coordinate N-formimidoyl-L-glutamate. Ser333 lines the 4-imidazolone-5-propanoate pocket.

It belongs to the metallo-dependent hydrolases superfamily. HutI family. Requires Zn(2+) as cofactor. Fe(3+) serves as cofactor.

It is found in the cytoplasm. The catalysed reaction is 4-imidazolone-5-propanoate + H2O = N-formimidoyl-L-glutamate. Its pathway is amino-acid degradation; L-histidine degradation into L-glutamate; N-formimidoyl-L-glutamate from L-histidine: step 3/3. Its function is as follows. Catalyzes the hydrolytic cleavage of the carbon-nitrogen bond in imidazolone-5-propanoate to yield N-formimidoyl-L-glutamate. It is the third step in the universal histidine degradation pathway. This Geobacillus thermodenitrificans (strain NG80-2) protein is Imidazolonepropionase.